Here is a 71-residue protein sequence, read N- to C-terminus: Large ribosomal subunit protein bL31 (71 aa).

Cysteine 16, cysteine 18, cysteine 37, and cysteine 40 together coordinate Zn(2+).

The protein belongs to the bacterial ribosomal protein bL31 family. Type A subfamily. Part of the 50S ribosomal subunit. Zn(2+) serves as cofactor.

Binds the 23S rRNA. The sequence is that of Large ribosomal subunit protein bL31 from Pseudomonas putida (strain W619).